The primary structure comprises 420 residues: Calsequestrin-1 (420 aa).

Positions 1–22 (MKGPWLVLAALCLSLANLGPRG) are cleaved as a signal peptide. Asparagine 338 carries N-linked (GlcNAc...) asparagine glycosylation. Positions 369 to 420 (LEGEVNTEDDDDDDDDDDDDDDDDDDDDDDDDDDDDDDDDDDDDDDDDDDDD) are disordered.

It belongs to the calsequestrin family. As to quaternary structure, monomer; increases in response to a depletion of intracellular calcium. Homodimer. Homotetramer and homopolymer. Can form linear homooligomers. Ca(2+) ions promote oligomerization. Detected in skeletal muscle (at protein level). Detected in skeletal muscle.

It is found in the endoplasmic reticulum. Its subcellular location is the sarcoplasmic reticulum. The protein resides in the sarcoplasmic reticulum lumen. It localises to the sarcoplasmic reticulum membrane. The protein localises to the mitochondrion matrix. Calsequestrin is a high-capacity, moderate affinity, calcium-binding protein and thus acts as an internal calcium store in muscle. Calcium ions are bound by clusters of acidic residues at the protein surface, often at the interface between subunits. Can bind around 80 Ca(2+) ions. Regulates the release of lumenal Ca(2+) via the calcium release channel RYR1; this plays an important role in triggering muscle contraction. Negatively regulates store-operated Ca(2+) entry (SOCE) activity. In Pelophylax lessonae (Pool frog), this protein is Calsequestrin-1.